Here is a 151-residue protein sequence, read N- to C-terminus: MSTPENPSVSFFSLFRRGQLYAKTWPLEKRLAPVFVDNRVIRITRYAIRFMPPIAVFTLCWQIALGGQLGPAVATALFALSLPMQGLWWLGKRSVTPLPPTILNWFYEVRGKLQEAGQALAPVEGKPDYQALADTLKRAFKQLDKTFLDDL.

A run of 2 helical transmembrane segments spans residues 46 to 65 and 69 to 91; these read YAIRFMPPIAVFTLCWQIAL and LGPAVATALFALSLPMQGLWWLG.

It belongs to the UPF0208 family.

It localises to the cell inner membrane. In Enterobacter sp. (strain 638), this protein is UPF0208 membrane protein Ent638_2839.